A 347-amino-acid polypeptide reads, in one-letter code: MPLFTEAPKSLCILRLSAVGDVCHALAVVQHIQEYYPQTEMTWIVGKTEMGLLSSIPNITLIPYDKKTGWKGVLSLWKQLKNKQFDALLNMQTAFRASILSLGIKAKFKIGFGEKRSREGQWLFVNRRIRDPFSPHVLDGFMAFAEYIGVPKAEPKWELAISQDDYKFADQFIDFSRKNLLISPCSSKAEKDWLIEGYAEVANIAHQHNINVIFCSSPAKRELEIVEKITALCHFTPTNIAGKTNLKQLTALISKVDLVLSPDSGPAHIATTQGTPVIGLYAYHNPLRTAPYNNLDNVVSVYEENAQKEFGKPSSELPWATKLKGKNLMTEIQVEPVIGQMKKLGLF.

The protein belongs to the glycosyltransferase 9 family.

The protein operates within bacterial outer membrane biogenesis; LPS core biosynthesis. In terms of biological role, catalyzes heptose transfer to the lipopolysaccharide core. It transfers the first L-glycero-D-manno-heptose to the phosphorylated 3-deoxy-alpha-D-manno-octulosonic acid (Kdo-P) of the inner core. The sequence is that of Lipopolysaccharide core heptosyltransferase OpsX from Haemophilus influenzae (strain ATCC 51907 / DSM 11121 / KW20 / Rd).